We begin with the raw amino-acid sequence, 569 residues long: 2-isopropylmalate synthase (569 aa).

Positions 31–305 constitute a Pyruvate carboxyltransferase domain; the sequence is PRWMSTDLRD…APELDFSDID (275 aa). The Mg(2+) site is built by aspartate 40, histidine 244, histidine 246, and asparagine 280. The tract at residues 437–569 is regulatory domain; sequence RETPLRYVSH…TASASAATEA (133 aa).

The protein belongs to the alpha-IPM synthase/homocitrate synthase family. LeuA type 2 subfamily. Homodimer. It depends on Mg(2+) as a cofactor.

The protein resides in the cytoplasm. It catalyses the reaction 3-methyl-2-oxobutanoate + acetyl-CoA + H2O = (2S)-2-isopropylmalate + CoA + H(+). It functions in the pathway amino-acid biosynthesis; L-leucine biosynthesis; L-leucine from 3-methyl-2-oxobutanoate: step 1/4. In terms of biological role, catalyzes the condensation of the acetyl group of acetyl-CoA with 3-methyl-2-oxobutanoate (2-ketoisovalerate) to form 3-carboxy-3-hydroxy-4-methylpentanoate (2-isopropylmalate). The polypeptide is 2-isopropylmalate synthase (Cupriavidus taiwanensis (strain DSM 17343 / BCRC 17206 / CCUG 44338 / CIP 107171 / LMG 19424 / R1) (Ralstonia taiwanensis (strain LMG 19424))).